The sequence spans 197 residues: 3-isopropylmalate dehydratase small subunit (197 aa).

The protein belongs to the LeuD family. LeuD type 1 subfamily. As to quaternary structure, heterodimer of LeuC and LeuD.

It carries out the reaction (2R,3S)-3-isopropylmalate = (2S)-2-isopropylmalate. Its pathway is amino-acid biosynthesis; L-leucine biosynthesis; L-leucine from 3-methyl-2-oxobutanoate: step 2/4. In terms of biological role, catalyzes the isomerization between 2-isopropylmalate and 3-isopropylmalate, via the formation of 2-isopropylmaleate. In Streptomyces avermitilis (strain ATCC 31267 / DSM 46492 / JCM 5070 / NBRC 14893 / NCIMB 12804 / NRRL 8165 / MA-4680), this protein is 3-isopropylmalate dehydratase small subunit.